A 506-amino-acid polypeptide reads, in one-letter code: Galactose/methyl galactoside import ATP-binding protein MglA (506 aa).

ABC transporter domains are found at residues L14–S249 and V264–L506. ATP is bound at residue G46 to S53.

It belongs to the ABC transporter superfamily. Galactose/methyl galactoside importer (TC 3.A.1.2.3) family. As to quaternary structure, the complex is composed of one ATP-binding protein (MglA), two transmembrane proteins (MglC) and a solute-binding protein (MglB).

It localises to the cell inner membrane. The enzyme catalyses D-galactose(out) + ATP + H2O = D-galactose(in) + ADP + phosphate + H(+). It catalyses the reaction methyl beta-D-galactoside(out) + ATP + H2O = methyl beta-D-galactoside(in) + ADP + phosphate + H(+). Functionally, part of the ABC transporter complex MglABC involved in galactose/methyl galactoside import. Responsible for energy coupling to the transport system. The sequence is that of Galactose/methyl galactoside import ATP-binding protein MglA from Shigella boydii serotype 4 (strain Sb227).